The following is an 857-amino-acid chain: MLGGLLHRGHKIKGTVVLMRKNVLHVNSVTSVGGIIGQGLDLVGSTLDTLTAFLGRPVSLQLISATKADANGKGKLGKATFLEGIITSLPTLGAGQSAFKINFEWDDGSGILGAFYIKNFMQTEFFLVSLTLEDIPNHGSIHFVCNSWIYNAKLFKSDRIFFANQTYLPSETPAPLVKYREEELHNLRGDGTGERKEWERVYDYDVYNDLGDPDKGENHARPVLGGNDTFPYPRRGRTGRKPTRKDPNSESRSNDVYLPRDEAFGHLKSSDFLTYGLKSVSQNVLPLLQSAFDLNFTPREFDSFDEVHGLYSGGIKLPTDIISKISPLPVLKEIFRTDGEQALKFPPPKVIQVSKSAWMTDEEFAREMLAGVNPNLIRCLKEFPPRSKLDSQVYGDHTSQITKEHLEPNLEGLTVDEAIQNKRLFLLGHHDPIMPYLRRINATSTKAYATRTILFLKNDGTLRPLAIELSLPHPQGDQSGAFSQVFLPADEGVESSIWLLAKAYVVVNDSCYHQLVSHWLNTHAVVEPFIIATNRHLSVVHPIYKLLHPHYRDTMNINGLARLSLVNDGGVIEQTFLWGRYSVEMSAVVYKDWVFTDQALPADLIKRGMAIEDPSCPHGIRLVIEDYPYAVDGLEIWDAIKTWVHEYVFLYYKSDDTLREDPELQACWKELVEVGHGDKKNEPWWPKMQTREELVEACAIIIWTASALHAAVNFGQYPYGGLILNRPTLSRRFMPEKGSAEYEELRKNPQKAYLKTITPKFQTLIDLSVIEILSRHASDEVYLGERDNPNWTSDTRALEAFKRFGNKLAQIENKLSERNNDEKLRNRCGPVQMPYTLLLPSSKEGLTFRGIPNSISI.

Positions 38–163 constitute a PLAT domain; sequence QGLDLVGSTL…LFKSDRIFFA (126 aa). The Lipoxygenase domain maps to 166–857; the sequence is TYLPSETPAP…FRGIPNSISI (692 aa). The interval 212 to 257 is disordered; it reads DPDKGENHARPVLGGNDTFPYPRRGRTGRKPTRKDPNSESRSNDVY. Residues 234–243 show a composition bias toward basic residues; it reads RRGRTGRKPT. The segment covering 244 to 257 has biased composition (basic and acidic residues); sequence RKDPNSESRSNDVY. The Fe cation site is built by H518, H523, H709, N713, and I857.

The protein belongs to the lipoxygenase family. As to quaternary structure, monomer. It depends on Fe cation as a cofactor.

It localises to the cytoplasm. The catalysed reaction is (9Z,12Z)-octadecadienoate + O2 = (9S)-hydroperoxy-(10E,12Z)-octadecadienoate. The protein operates within lipid metabolism; oxylipin biosynthesis. In terms of biological role, plant lipoxygenase may be involved in a number of diverse aspects of plant physiology including growth and development, pest resistance, and senescence or responses to wounding. It catalyzes the hydroperoxidation of lipids containing a cis,cis-1,4-pentadiene structure. This Glycine max (Soybean) protein is Seed linoleate 9S-lipoxygenase-3 (LOX1.3).